Reading from the N-terminus, the 377-residue chain is [2-(trimethylamino)ethyl]phosphonate dioxygenase (377 aa).

Residues 95 to 119 are disordered; the sequence is DTDQSSEVGRTSPDVETWDSSQPAP. Residue N187 participates in [2-(trimethylamino)ethyl]phosphonate binding. H198 provides a ligand contact to 2-oxoglutarate. Residues H198 and D200 each contribute to the Fe(2+) site. The [2-(trimethylamino)ethyl]phosphonate site is built by D200, N201, Y203, N286, and R288. 2-oxoglutarate is bound by residues H341, R343, and R352. H341 provides a ligand contact to Fe(2+).

The protein belongs to the gamma-BBH/TMLD family. In terms of assembly, homodimer. The cofactor is Fe(2+). It depends on L-ascorbate as a cofactor.

The enzyme catalyses [2-(trimethylamino)ethyl]phosphonate + 2-oxoglutarate + O2 = [(1R)-1-hydroxy-2-(trimethylamino)ethyl]phosphonate + succinate + CO2. In terms of biological role, involved in the degradation of the naturally occurring organophosphonate 2-(trimethylammonio)ethylphosphonate (TMAEP). Catalyzes the hydroxylation of TMAEP to (R)-1-hydroxy-2-(trimethylammonio)ethylphosphonate (OH-TMAEP). Is highly specific for its N-trimethylated substrate. Cannot use gamma-butyrobetaine as substrate. This chain is [2-(trimethylamino)ethyl]phosphonate dioxygenase, found in Leisingera caerulea (Phaeobacter caeruleus).